Consider the following 691-residue polypeptide: POU domain, class 6, transcription factor 2 (691 aa).

The span at 25-36 shows a compositional bias: basic and acidic residues; it reads MNAELRGEDKAA. Disordered regions lie at residues 25 to 93, 186 to 297, and 435 to 461; these read MNAE…PVGP, LQQQ…LQLV, and SQAS…SALS. The span at 186-195 shows a compositional bias: low complexity; that stretch reads LQQQQQQQQQ. Residues 196–210 are compositionally biased toward pro residues; it reads QPPPSTNQHPQPAPQ. A compositionally biased stretch (low complexity) spans 211–220; the sequence is APSQSQQQPL. Residues 221–238 are compositionally biased toward pro residues; the sequence is QPTPPQQPPPASQQPPAP. Composition is skewed to low complexity over residues 239–280 and 438–461; these read TSQL…SQSP and SMSQ…SALS. Positions 476 to 586 constitute a POU-specific domain; the sequence is VDGVNLEEIR…VLERWMAEAE (111 aa). Residues 607-666 constitute a DNA-binding region (homeobox); the sequence is KRKRRTSFTPQALEILNAHFEKNTHPSGQEMTEIAEKLNYDREVVRVWFCNKRQALKNTI.

The protein belongs to the POU transcription factor family. Class-6 subfamily. As to expression, expressed only within the CNS, where its expression is restricted to the medical habenulla, to a dispersed population of neurons in the dorsal hypothalamus, and to subsets of ganglion and amacrine cells in the retina.

It localises to the nucleus. Its function is as follows. Probable transcription factor likely to be involved in early steps in the differentiation of amacrine and ganglion cells. Recognizes and binds to the DNA sequence 5'-ATGCAAAT-3'. Isoform 1 does not bind DNA. The sequence is that of POU domain, class 6, transcription factor 2 (POU6F2) from Homo sapiens (Human).